The sequence spans 136 residues: Organic hydroperoxide resistance protein OhrB (136 aa).

The protein belongs to the OsmC/Ohr family.

Involved in organic hydroperoxide resistance. In Bacillus subtilis (strain 168), this protein is Organic hydroperoxide resistance protein OhrB (ohrB).